A 116-amino-acid chain; its full sequence is Ig heavy chain V-A1 region BS-5 (116 aa).

Gln1 is modified (pyrrolidone carboxylic acid). The Ig-like domain occupies 1–107 (QSVEESGGRL…LVHLAFVDVW (107 aa)).

This Oryctolagus cuniculus (Rabbit) protein is Ig heavy chain V-A1 region BS-5.